The following is a 199-amino-acid chain: Ribonuclease HII (199 aa).

Residues 7–196 form the RNase H type-2 domain; that stretch reads PWVCGVDEAG…VRELMANEKD (190 aa). A divalent metal cation is bound by residues Asp13, Glu14, and Asp105.

Belongs to the RNase HII family. Mn(2+) is required as a cofactor. Mg(2+) serves as cofactor.

It localises to the cytoplasm. It catalyses the reaction Endonucleolytic cleavage to 5'-phosphomonoester.. Endonuclease that specifically degrades the RNA of RNA-DNA hybrids. The chain is Ribonuclease HII from Nitrosospira multiformis (strain ATCC 25196 / NCIMB 11849 / C 71).